The primary structure comprises 5762 residues: Mucin-5B (5762 aa).

The N-terminal stretch at 1-25 is a signal peptide; it reads MGAPSACRTLVLALAAMLVVPQAET. A disordered region spans residues 27 to 50; that stretch reads GPVEPSWENAGHTMDGGAPTSSPT. Residues 75–245 form the VWFD 1 domain; sequence RVCSTWGDFH…KLDGPTEQCP (171 aa). Intrachain disulfides connect Cys-77/Cys-207 and Cys-99/Cys-244. A glycan (N-linked (GlcNAc...) asparagine) is linked at Asn-145. A Cu(2+)-binding site is contributed by Glu-194. N-linked (GlcNAc...) asparagine glycans are attached at residues Asn-201 and Asn-254. Cu(2+) contacts are provided by His-311 and His-358. In terms of domain architecture, TIL 1 spans 329–385; sequence CPLNMQHQECGSPCTDTCSNPQRAQLCEDHCVDGCFCPPGTVLDDITHSGCLPLGQC. An N-linked (GlcNAc...) asparagine glycan is attached at Asn-401. In terms of domain architecture, VWFD 2 spans 423–598; the sequence is GTCSVQGGAH…NTWKAQAACA (176 aa). Disulfide bonds link Cys-425/Cys-562, Cys-447/Cys-597, and Cys-469/Cys-477. N-linked (GlcNAc...) asparagine glycosylation occurs at Asn-515. TIL domains are found at residues 695-752 and 805-855; these read CPKS…AQEC and NSSA…EEDC. Asn-805 carries N-linked (GlcNAc...) asparagine glycosylation. The 73-residue stretch at 855–927 folds into the VWFC 1 domain; the sequence is CPCVHNEATY…EYILAQDYCG (73 aa). Residues 893 to 1062 form the VWFD 3 domain; the sequence is GTCVAYGDGH…NSWKLSPSCP (170 aa). Disulfide bonds link Cys-895/Cys-1026, Cys-917/Cys-1061, Cys-926/Cys-1023, and Cys-944/Cys-951. The N-linked (GlcNAc...) asparagine glycan is linked to Asn-929. Asn-1276 and Asn-1292 each carry an N-linked (GlcNAc...) asparagine glycan. The stretch at 1333 to 1432 is one Cys-rich subdomain 1 repeat; the sequence is CVREVCRWSS…RVLCCEYVPC (100 aa). The 7 X Cys-rich subdomain repeats stretch occupies residues 1333 to 4228; the sequence is CVREVCRWSS…RVFCCNYGHC (2896 aa). Trp-1340 carries C-linked (Man) tryptophan glycosylation. Disordered regions lie at residues 1437-1462 and 1480-1502; these read APGT…QTTA and LTSQ…GTTT. Positions 1450–1462 are enriched in low complexity; it reads TEPAVPTPTQTTA. The Cys-rich subdomain 2 repeat unit spans residues 1503–1604; sequence CQPRCQWTEW…VLCCSDDHCR (102 aa). Trp-1509 is a glycosylation site (C-linked (Man) tryptophan). A glycan (N-linked (GlcNAc...) asparagine) is linked at Asn-1556. Positions 1607 to 1783 are disordered; that stretch reads ATTPPPTTEL…NTTTSQGTTR (177 aa). Residues 1614 to 1624 are compositionally biased toward low complexity; that stretch reads TELETATTTTT. 2 stretches are compositionally biased toward polar residues: residues 1625-1638 and 1645-1662; these read QALF…SSPG and ASTT…SPRY. Residues 1663–1684 show a composition bias toward low complexity; the sequence is TSTLGTATTGGPTTPAGSTEPT. Residues 1689–1706 are compositionally biased toward polar residues; that stretch reads ATSTLPTRSALPGTTGSL. Composition is skewed to low complexity over residues 1739–1756 and 1765–1777; these read EPLT…LSTS and TETT…NTTT. N-linked (GlcNAc...) asparagine glycosylation occurs at Asn-1774. One copy of the Cys-rich subdomain 3 repeat lies at 1784-1885; that stretch reads CQPKCEWTEW…VLCCDDYSHC (102 aa). Residue Trp-1790 is glycosylated (C-linked (Man) tryptophan). Low complexity predominate over residues 1890–1987; the sequence is ATSSTATPSS…TSVTPIPSSS (98 aa). Disordered regions lie at residues 1890-2019, 2031-2100, 2114-2211, and 2242-2302; these read ATSS…TAHT, GATG…GTTH, TGSM…HTVR, and TGTT…SSPT. An 11 X approximate tandem repeats, Ser/Thr-rich region spans residues 1890-2199; that stretch reads ATSSTATPSS…VPNTMATTHG (310 aa). A compositionally biased stretch (polar residues) spans 1988-1997; it reads LGTTWTRLSQ. Low complexity predominate over residues 1998–2019; the sequence is TTTPTATMSTATPSSTPETAHT. Residues 2114–2181 are compositionally biased toward low complexity; sequence TGSMATPSSS…TSNTVTPSSA (68 aa). Polar residues predominate over residues 2182-2199; sequence LGTTHTPPVPNTMATTHG. One copy of the Cys-rich subdomain 4 repeat lies at 2313 to 2414; that stretch reads GCEPQCAWSE…RVFCCNYGHC (102 aa). The C-linked (Man) tryptophan glycan is linked to Trp-2320. Residues 2419 to 2756 form an 11 X approximate tandem repeats, Ser/Thr-rich region; that stretch reads ATSSTAMPSS…VPNTTATTHG (338 aa). Disordered regions lie at residues 2443-2462, 2473-2522, and 2556-2861; these read ATTT…PGTT, TVTV…ATAL, and TTPT…PTSA. Positions 2556 to 2738 are enriched in low complexity; the sequence is TTPTATMSTA…TSSTVTPSSA (183 aa). The span at 2739-2786 shows a compositional bias: polar residues; it reads LGTTHTPPVPNTTATTHGRSLSPSSPHTVRTAWTSATSGTLGTTHITE. Asn-2749 is a glycosylation site (N-linked (GlcNAc...) asparagine). Residues 2787–2861 are compositionally biased toward low complexity; the sequence is PSTGTSHTPA…TLLPSSPTSA (75 aa). An HAT 1 repeat occupies 2854-2886; it reads LPSSPTSAPITTVVTMGCEPQCAWSEWLDYSYP. The stretch at 2871–2971 is one Cys-rich subdomain 5 repeat; sequence CEPQCAWSEW…RVFCCNYGHC (101 aa). Residue Trp-2877 is glycosylated (C-linked (Man) tryptophan). The interval 2976–3456 is 17 X approximate tandem repeats, Ser/Thr-rich; that stretch reads ATSSTATPSS…VPNTTATTHG (481 aa). Low complexity-rich tracts occupy residues 3001–3017 and 3026–3049; these read TTTA…STPG and TSTA…RTAT. 4 disordered regions span residues 3001 to 3049, 3256 to 3357, 3371 to 3469, and 3481 to 3561; these read TTTA…RTAT, TTPT…GTTH, TGSM…TVRT, and TTHI…PTSA. A compositionally biased stretch (low complexity) spans 3371–3438; that stretch reads TGSMATPSSS…TSSTVTPSSA (68 aa). Residues 3439-3456 show a composition bias toward polar residues; it reads LGTTHTPPVPNTTATTHG. Residue Asn-3449 is glycosylated (N-linked (GlcNAc...) asparagine). A compositionally biased stretch (low complexity) spans 3487 to 3561; the sequence is PSTVTSHTPA…TLLPSSPTSA (75 aa). Residues 3554–3586 form an HAT 2 repeat; sequence LPSSPTSAPITTVVTTGCEPQCAWSEWLDYSYP. The stretch at 3571–3671 is one Cys-rich subdomain 6 repeat; the sequence is CEPQCAWSEW…RVFCCNYGHC (101 aa). Residue Trp-3577 is glycosylated (C-linked (Man) tryptophan). The 11 X approximate tandem repeats, Ser/Thr-rich stretch occupies residues 3676 to 4013; the sequence is ATSSTATPSS…VPNTTATTHG (338 aa). 3 disordered regions span residues 3699-3779, 3813-3917, and 3956-4118; these read TATT…ATAL, TTPT…HTPT, and ATGS…PTSA. Residues 3956–3995 are compositionally biased toward low complexity; the sequence is ATGSTTNPSSTPGTTPIPPVLTTTATTPAATSSTVTPSSA. Over residues 3996–4043 the composition is skewed to polar residues; the sequence is LGTTHTPPVPNTTATTHGRSLSPSSPHTVRTAWTSATSGTLGTTHITE. A glycan (N-linked (GlcNAc...) asparagine) is linked at Asn-4006. A compositionally biased stretch (low complexity) spans 4044–4118; that stretch reads PSTGTSHTPA…TLLPSSPTSA (75 aa). The HAT 3 repeat unit spans residues 4111–4143; that stretch reads LPSSPTSAPITTVVTTGCEPQCAWSEWLDYSYP. Residues 4128–4228 form a Cys-rich subdomain 7 repeat; it reads CEPQCAWSEW…RVFCCNYGHC (101 aa). The C-linked (Man) tryptophan glycan is linked to Trp-4134. The tract at residues 4233–4879 is 23 X approximate tandem repeats, Ser/Thr-rich; it reads ATSSTAMPSS…TLGTAHTPKV (647 aa). Composition is skewed to low complexity over residues 4259–4274 and 4283–4389; these read TTAS…STPG and TSPA…PGTT. 4 disordered regions span residues 4259–4389, 4428–4447, 4458–4527, and 4541–4750; these read TTAS…PGTT, ATTT…PGTT, TVTV…AIPS, and TTPT…ATSF. 7 N-linked (GlcNAc...) asparagine glycosylation sites follow: Asn-4804, Asn-4960, Asn-5017, Asn-5024, Asn-5046, Asn-5096, and Asn-5111. The region spanning 5073 to 5261 is the VWFD 4 domain; it reads CICSMWGGSH…VPDSRKDGCW (189 aa). 3 disulfide bridges follow: Cys-5075-Cys-5221, Cys-5097-Cys-5260, and Cys-5121-Cys-5132. Residue Asn-5215 is glycosylated (N-linked (GlcNAc...) asparagine). The region spanning 5412-5484 is the VWFC 2 domain; it reads CPCVGPDGFP…NPCCPETVCV (73 aa). N-linked (GlcNAc...) asparagine glycosylation is found at Asn-5486, Asn-5526, Asn-5565, Asn-5566, Asn-5602, Asn-5612, Asn-5663, Asn-5677, and Asn-5721. A VWFC 3 domain is found at 5521–5587; it reads QLCSYNGTFY…VAGQCCGECV (67 aa). 4 disulfides stabilise this stretch: Cys-5653/Cys-5705, Cys-5672/Cys-5719, Cys-5681/Cys-5735, and Cys-5685/Cys-5737. Residues 5653–5742 enclose the CTCK domain; the sequence is CEEDSCQVRI…DECGCTPFCV (90 aa).

Homomultimer; disulfide-linked. The N- and C-terminus mediate their assembly into higher order structures to form filaments. The CTCK domains of two polypeptides associate in the endoplasmic reticulum to generate intermolecularly disulfide-bonded dimers. These dimers progress to the Golgi apparatus, which is a more acidic environment than the endoplasmic reticulum. Under acidic conditions, the N-termini form non-covalent intermolecular interactions that juxtapose assemblies from different CTCK-linked dimers to produce long, disulfide-linked polymers that remain highly compact until secretion. In terms of processing, highly glycosylated. C-, N- and O-glycosylated. C-mannosylated in the Cys-rich subdomains probably on the first Trp residue of the WXXW motif. Highly O-glycosylated in the Ser/Thr-rich tandem repeat (TR) region. The repeat region is about 59% O-glycosylated with a high abundance of NeuAc(2)Hex(1)HexNac1-ol. In terms of tissue distribution, expressed on surface airway epithelia. Expressed mainly in mucous cells of submucosal glands of airway tissues. Highly expressed in the sublingual gland. Also found in submaxillary glands, endocervix, gall bladder, and pancreas.

The protein localises to the secreted. Gel-forming mucin that is thought to contribute to the lubricating and viscoelastic properties of whole saliva and cervical mucus. The protein is Mucin-5B (MUC5B) of Homo sapiens (Human).